A 262-amino-acid polypeptide reads, in one-letter code: Ninja-family protein 2 (262 aa).

The interval 49 to 70 (RNSLACNTSKEAAGQSPKEMNA) is disordered.

The protein belongs to the Ninja family.

The protein resides in the nucleus. The chain is Ninja-family protein 2 from Zea mays (Maize).